The sequence spans 411 residues: Arginine deiminase (411 aa).

C401 functions as the Amidino-cysteine intermediate in the catalytic mechanism.

The protein belongs to the arginine deiminase family. Glycosylated.

It localises to the cytoplasm. The enzyme catalyses L-arginine + H2O = L-citrulline + NH4(+). Its pathway is amino-acid degradation; L-arginine degradation via ADI pathway; carbamoyl phosphate from L-arginine: step 1/2. In Streptococcus pyogenes serotype M3 (strain ATCC BAA-595 / MGAS315), this protein is Arginine deiminase.